The chain runs to 248 residues: Small ribosomal subunit protein eS6 (248 aa).

The interval 215–248 (VQRKKESKAKREEAKRRRSASIRESKSSVSSDKK) is disordered. Residues 223-248 (AKREEAKRRRSASIRESKSSVSSDKK) show a composition bias toward basic and acidic residues. Residues S233, S235, S239, S242, S244, and S245 each carry the phosphoserine modification.

The protein belongs to the eukaryotic ribosomal protein eS6 family. As to quaternary structure, component of the small ribosomal subunit. Part of the small subunit (SSU) processome, composed of more than 70 proteins and the RNA chaperone small nucleolar RNA (snoRNA) U3. Post-translationally, ribosomal protein S6 is the major substrate of protein kinases in eukaryote ribosomes. The phosphorylation is stimulated by growth factors, tumor promoting agents, and mitogens. It is dephosphorylated at growth arrest.

The protein localises to the cytoplasm. The protein resides in the nucleus. It localises to the nucleolus. Functionally, component of the 40S small ribosomal subunit. Plays an important role in controlling cell growth and proliferation through the selective translation of particular classes of mRNA. Part of the small subunit (SSU) processome, first precursor of the small eukaryotic ribosomal subunit. During the assembly of the SSU processome in the nucleolus, many ribosome biogenesis factors, an RNA chaperone and ribosomal proteins associate with the nascent pre-rRNA and work in concert to generate RNA folding, modifications, rearrangements and cleavage as well as targeted degradation of pre-ribosomal RNA by the RNA exosome. This Drosophila melanogaster (Fruit fly) protein is Small ribosomal subunit protein eS6 (RpS6).